The sequence spans 159 residues: Putative RING-H2 finger protein ATL69 (159 aa).

A helical membrane pass occupies residues 13–33 (LGYGIAIAVSILVLISFIMLA). An RING-type; atypical zinc finger spans residues 94–136 (CSICLCDYEAREPVRCIPECNHCFHTDCVDEWLRTSATCPLCR).

This sequence belongs to the RING-type zinc finger family. ATL subfamily.

It is found in the membrane. It carries out the reaction S-ubiquitinyl-[E2 ubiquitin-conjugating enzyme]-L-cysteine + [acceptor protein]-L-lysine = [E2 ubiquitin-conjugating enzyme]-L-cysteine + N(6)-ubiquitinyl-[acceptor protein]-L-lysine.. It functions in the pathway protein modification; protein ubiquitination. This chain is Putative RING-H2 finger protein ATL69 (ATL69), found in Arabidopsis thaliana (Mouse-ear cress).